Here is a 215-residue protein sequence, read N- to C-terminus: Adenylate kinase (215 aa).

10 to 15 provides a ligand contact to ATP; that stretch reads GAGKGT. Residues 30–59 are NMP; sequence STGDMLRAAIKAGTPLGLEAKKIIDEGGLV. AMP is bound by residues Thr-31, Arg-36, 57 to 59, 85 to 88, and Gln-92; these read GLV and GFPR. The LID stretch occupies residues 122–159; it reads GRRVHLASGRTYHVTYNPPKVEGKDDVTGEDLIQRDDD. ATP-binding positions include Arg-123 and 132-133; that span reads TY. AMP is bound by residues Arg-156 and Arg-167. Gln-200 contacts ATP.

The protein belongs to the adenylate kinase family. As to quaternary structure, monomer.

Its subcellular location is the cytoplasm. It catalyses the reaction AMP + ATP = 2 ADP. It participates in purine metabolism; AMP biosynthesis via salvage pathway; AMP from ADP: step 1/1. In terms of biological role, catalyzes the reversible transfer of the terminal phosphate group between ATP and AMP. Plays an important role in cellular energy homeostasis and in adenine nucleotide metabolism. This chain is Adenylate kinase, found in Neisseria meningitidis serogroup B (strain ATCC BAA-335 / MC58).